Here is a 375-residue protein sequence, read N- to C-terminus: N5-carboxyaminoimidazole ribonucleotide synthase (375 aa).

ATP-binding positions include Arg-108, Lys-148, 153-159 (GYDGKGQ), 183-186 (EQYL), Glu-191, His-214, and 268-269 (NE). One can recognise an ATP-grasp domain in the interval 112-298 (KQTLQDSGSN…QFDTHIKAIT (187 aa)).

This sequence belongs to the PurK/PurT family. Homodimer.

It carries out the reaction 5-amino-1-(5-phospho-beta-D-ribosyl)imidazole + hydrogencarbonate + ATP = 5-carboxyamino-1-(5-phospho-D-ribosyl)imidazole + ADP + phosphate + 2 H(+). It functions in the pathway purine metabolism; IMP biosynthesis via de novo pathway; 5-amino-1-(5-phospho-D-ribosyl)imidazole-4-carboxylate from 5-amino-1-(5-phospho-D-ribosyl)imidazole (N5-CAIR route): step 1/2. Catalyzes the ATP-dependent conversion of 5-aminoimidazole ribonucleotide (AIR) and HCO(3)(-) to N5-carboxyaminoimidazole ribonucleotide (N5-CAIR). The sequence is that of N5-carboxyaminoimidazole ribonucleotide synthase from Staphylococcus saprophyticus subsp. saprophyticus (strain ATCC 15305 / DSM 20229 / NCIMB 8711 / NCTC 7292 / S-41).